Reading from the N-terminus, the 134-residue chain is Small ribosomal subunit protein uS9 (134 aa).

The tract at residues 109-134 (DARRTEPHKPSKSSKGPRAKRQKSYR) is disordered. Positions 118–134 (PSKSSKGPRAKRQKSYR) are enriched in basic residues.

Belongs to the universal ribosomal protein uS9 family.

The protein is Small ribosomal subunit protein uS9 of Methanococcus maripaludis (strain DSM 14266 / JCM 13030 / NBRC 101832 / S2 / LL).